A 147-amino-acid chain; its full sequence is Ribosome-binding factor A (147 aa).

Positions 123–147 (LAKLKEGAQPAGDANPYKTSDEEED) are disordered.

It belongs to the RbfA family. As to quaternary structure, monomer. Binds 30S ribosomal subunits, but not 50S ribosomal subunits or 70S ribosomes.

The protein localises to the cytoplasm. One of several proteins that assist in the late maturation steps of the functional core of the 30S ribosomal subunit. Associates with free 30S ribosomal subunits (but not with 30S subunits that are part of 70S ribosomes or polysomes). Required for efficient processing of 16S rRNA. May interact with the 5'-terminal helix region of 16S rRNA. This Corynebacterium aurimucosum (strain ATCC 700975 / DSM 44827 / CIP 107346 / CN-1) (Corynebacterium nigricans) protein is Ribosome-binding factor A.